Consider the following 206-residue polypeptide: LexA repressor (206 aa).

Residues 28–48 constitute a DNA-binding region (H-T-H motif); sequence RAEIARRLGFKSANAAEEHLK. Residues Ser-123 and Lys-160 each act as for autocatalytic cleavage activity in the active site.

The protein belongs to the peptidase S24 family. Homodimer.

It carries out the reaction Hydrolysis of Ala-|-Gly bond in repressor LexA.. Functionally, represses a number of genes involved in the response to DNA damage (SOS response), including recA and lexA. In the presence of single-stranded DNA, RecA interacts with LexA causing an autocatalytic cleavage which disrupts the DNA-binding part of LexA, leading to derepression of the SOS regulon and eventually DNA repair. The protein is LexA repressor of Shewanella pealeana (strain ATCC 700345 / ANG-SQ1).